The sequence spans 565 residues: Heme/hemopexin transporter protein HuxB (565 aa).

The first 26 residues, 1–26, serve as a signal peptide directing secretion; it reads MKMRPRYSVIASAVSLGFVLSKSVMA. In terms of domain architecture, POTRA spans 73–150; sequence FPLTQVQILD…GTVKILLLKG (78 aa).

This sequence belongs to the TPS (TC 1.B.20) family.

It is found in the cell outer membrane. Likely functions in the release of soluble HxuA from the cell. Its function is as follows. Probable member of a two partner secretion pathway (TPS) in which it mediates the secretion of HuxA. This Haemophilus influenzae protein is Heme/hemopexin transporter protein HuxB (hxuB).